Here is a 269-residue protein sequence, read N- to C-terminus: Centromere protein K (269 aa).

Residues 1 to 10 (MNQEDLDPDS) show a composition bias toward acidic residues. Positions 1 to 20 (MNQEDLDPDSTTDVGDVTNT) are disordered. Coiled-coil stretches lie at residues 22–42 (EELI…QNKL) and 98–151 (QKLR…NKVE).

This sequence belongs to the CENP-K/MCM22 family. In terms of assembly, component of the CENPA-CAD complex, composed of CENPI, CENPK, CENPL, CENPO, CENPP, CENPQ, CENPR and CENPS. The CENPA-CAD complex interacts with the CENPA-NAC complex, at least composed of CENPA, CENPC, CENPH, CENPM, CENPN, CENPT and CENPU. Interacts directly with CENPH. In terms of tissue distribution, detected in several fetal organs with highest levels in fetal liver. In adults, it is weakly expressed in lung and placenta.

The protein resides in the nucleus. The protein localises to the chromosome. It is found in the centromere. Its subcellular location is the kinetochore. In terms of biological role, component of the CENPA-CAD (nucleosome distal) complex, a complex recruited to centromeres which is involved in assembly of kinetochore proteins, mitotic progression and chromosome segregation. May be involved in incorporation of newly synthesized CENPA into centromeres via its interaction with the CENPA-NAC complex. Acts in coordination with KNL1 to recruit the NDC80 complex to the outer kinetochore. The sequence is that of Centromere protein K (CENPK) from Homo sapiens (Human).